Consider the following 188-residue polypeptide: Peptidyl-tRNA hydrolase (188 aa).

Phe15 is a binding site for tRNA. His20 serves as the catalytic Proton acceptor. Residues Tyr64, Asn66, and Asn112 each contribute to the tRNA site.

Belongs to the PTH family. Monomer.

The protein localises to the cytoplasm. It catalyses the reaction an N-acyl-L-alpha-aminoacyl-tRNA + H2O = an N-acyl-L-amino acid + a tRNA + H(+). Functionally, hydrolyzes ribosome-free peptidyl-tRNAs (with 1 or more amino acids incorporated), which drop off the ribosome during protein synthesis, or as a result of ribosome stalling. Its function is as follows. Catalyzes the release of premature peptidyl moieties from peptidyl-tRNA molecules trapped in stalled 50S ribosomal subunits, and thus maintains levels of free tRNAs and 50S ribosomes. This is Peptidyl-tRNA hydrolase from Borreliella burgdorferi (strain ATCC 35210 / DSM 4680 / CIP 102532 / B31) (Borrelia burgdorferi).